The following is a 283-amino-acid chain: ATP phosphoribosyltransferase (283 aa).

This sequence belongs to the ATP phosphoribosyltransferase family. Long subfamily. Requires Mg(2+) as cofactor.

It localises to the cytoplasm. The enzyme catalyses 1-(5-phospho-beta-D-ribosyl)-ATP + diphosphate = 5-phospho-alpha-D-ribose 1-diphosphate + ATP. The protein operates within amino-acid biosynthesis; L-histidine biosynthesis; L-histidine from 5-phospho-alpha-D-ribose 1-diphosphate: step 1/9. Its activity is regulated as follows. Feedback inhibited by histidine. Catalyzes the condensation of ATP and 5-phosphoribose 1-diphosphate to form N'-(5'-phosphoribosyl)-ATP (PR-ATP). Has a crucial role in the pathway because the rate of histidine biosynthesis seems to be controlled primarily by regulation of HisG enzymatic activity. This is ATP phosphoribosyltransferase from Bifidobacterium longum (strain NCC 2705).